Here is a 182-residue protein sequence, read N- to C-terminus: Adenine phosphoribosyltransferase (182 aa).

Belongs to the purine/pyrimidine phosphoribosyltransferase family. In terms of assembly, homodimer.

The protein resides in the cytoplasm. The catalysed reaction is AMP + diphosphate = 5-phospho-alpha-D-ribose 1-diphosphate + adenine. Its pathway is purine metabolism; AMP biosynthesis via salvage pathway; AMP from adenine: step 1/1. Functionally, catalyzes a salvage reaction resulting in the formation of AMP, that is energically less costly than de novo synthesis. The polypeptide is Adenine phosphoribosyltransferase (Campylobacter hominis (strain ATCC BAA-381 / DSM 21671 / CCUG 45161 / LMG 19568 / NCTC 13146 / CH001A)).